Here is a 550-residue protein sequence, read N- to C-terminus: Chaperonin GroEL (550 aa).

Residues 30–33 (TLGP), lysine 51, 87–91 (DGTTT), glycine 415, and aspartate 495 each bind ATP.

Belongs to the chaperonin (HSP60) family. Forms a cylinder of 14 subunits composed of two heptameric rings stacked back-to-back. Interacts with the co-chaperonin GroES.

The protein localises to the cytoplasm. The enzyme catalyses ATP + H2O + a folded polypeptide = ADP + phosphate + an unfolded polypeptide.. Functionally, together with its co-chaperonin GroES, plays an essential role in assisting protein folding. The GroEL-GroES system forms a nano-cage that allows encapsulation of the non-native substrate proteins and provides a physical environment optimized to promote and accelerate protein folding. The chain is Chaperonin GroEL from Dechloromonas aromatica (strain RCB).